Reading from the N-terminus, the 483-residue chain is Glutamyl-tRNA(Gln) amidotransferase subunit A (483 aa).

Active-site charge relay system residues include lysine 77 and serine 152. Serine 176 (acyl-ester intermediate) is an active-site residue.

The protein belongs to the amidase family. GatA subfamily. Heterotrimer of A, B and C subunits.

It catalyses the reaction L-glutamyl-tRNA(Gln) + L-glutamine + ATP + H2O = L-glutaminyl-tRNA(Gln) + L-glutamate + ADP + phosphate + H(+). Functionally, allows the formation of correctly charged Gln-tRNA(Gln) through the transamidation of misacylated Glu-tRNA(Gln) in organisms which lack glutaminyl-tRNA synthetase. The reaction takes place in the presence of glutamine and ATP through an activated gamma-phospho-Glu-tRNA(Gln). The protein is Glutamyl-tRNA(Gln) amidotransferase subunit A of Shouchella clausii (strain KSM-K16) (Alkalihalobacillus clausii).